A 415-amino-acid chain; its full sequence is uncharacterized protein (415 aa).

[4Fe-4S] cluster contacts are provided by C66, C72, C75, and C149. Residues Q249, F276, E296, and D344 each coordinate S-adenosyl-L-methionine. C370 acts as the Nucleophile in catalysis.

The protein belongs to the class I-like SAM-binding methyltransferase superfamily. RNA M5U methyltransferase family.

This is an uncharacterized protein from Brucella suis biovar 1 (strain 1330).